A 508-amino-acid polypeptide reads, in one-letter code: Catalase (508 aa).

Positions 1–21 (MHMSKSFLLISMGLASISVHA) are cleaved as a signal peptide. Catalysis depends on residues H72 and N145. Position 353 (Y353) interacts with heme. Over residues 373 to 392 (PKSPVANHNQDGPSNNSTGL) the composition is skewed to polar residues. The segment at 373 to 396 (PKSPVANHNQDGPSNNSTGLGNVD) is disordered.

This sequence belongs to the catalase family. The cofactor is heme.

Its subcellular location is the periplasm. It catalyses the reaction 2 H2O2 = O2 + 2 H2O. Its function is as follows. Decomposes hydrogen peroxide into water and oxygen; serves to protect cells from the toxic effects of hydrogen peroxide. The protein is Catalase of Vibrio vulnificus (strain YJ016).